The chain runs to 508 residues: Protein adenylyltransferase fic-1 (508 aa).

A helical membrane pass occupies residues 44 to 64 (TVIIISVLVSLICQHFVPYAV). TPR repeat units follow at residues 147-180 (AILAAKAAGRSRKDGNLERAMTIMEHAMALAPTN) and 181-214 (PQILIEMGQIREMHNELVEADQCYVKALAYDPGN). Positions 270 to 275 (TVAIEG) match the Inhibitory (S/T)XXXE(G/N) motif motif. Glu274 provides a ligand contact to ATP. In terms of domain architecture, Fido spans 326–461 (ISIDDILEMH…LRPFVRYVAK (136 aa)). Residue Thr352 is modified to O-AMP-threonine; by autocatalysis. An ATP-binding site is contributed by 357 to 360 (VGRF). His404 is an active-site residue. ATP contacts are provided by residues 408-415 (DGNGRTAR), 440-441 (YY), and Asn448. Thr476 carries the O-AMP-threonine; by autocatalysis modification. The segment at 482-508 (LNSGDSKLTPEESEVSEKIEAECRAGN) is disordered. A compositionally biased stretch (basic and acidic residues) spans 496-508 (VSEKIEAECRAGN).

It belongs to the fic family. In terms of assembly, forms homodimers; homodimerization might be required for adenylyltransferase activity. Ubiquitously expressed, with high expression in the germline.

It is found in the endoplasmic reticulum membrane. The protein resides in the nucleus membrane. It catalyses the reaction L-tyrosyl-[protein] + ATP = O-(5'-adenylyl)-L-tyrosyl-[protein] + diphosphate. The catalysed reaction is L-threonyl-[protein] + ATP = 3-O-(5'-adenylyl)-L-threonyl-[protein] + diphosphate. The enzyme catalyses 3-O-(5'-adenylyl)-L-threonyl-[protein] + H2O = L-threonyl-[protein] + AMP + H(+). The side chain of Glu-274 determines which of the two opposing activities (AMPylase or de-AMPylase) will take place. In response to endoplasmic reticulum stress, mediates de-AMPylase activity. Adenylyltransferase activity is inhibited by the inhibitory helix present at the N-terminus: Glu-274 binds ATP and competes with ATP-binding at Arg-415, thereby preventing adenylyltransferase activity. In unstressed cells, disengagement of Glu-274 promotes adenylyltransferase activity. Activation dissociates ATP-binding from Glu-274, allowing ordered binding of the entire ATP moiety with the alpha-phosphate in an orientation that is productive for accepting an incoming target hydroxyl side chain. Protein that can both mediate the addition of adenosine 5'-monophosphate (AMP) to specific residues of target proteins (AMPylation), and the removal of the same modification from target proteins (de-AMPylation), depending on the context. The side chain of Glu-274 determines which of the two opposing activities (AMPylase or de-AMPylase) will take place. Adenylyltransferase that mediates the addition of adenosine 5'-monophosphate (AMP) to specific residues of target proteins. In vivo target proteins include the heat-shock 70 family proteins hsp-1 and hsp-3 and the translation elongation factors eef-1A, eef-1G and eef-2. Can AMPylate core histone H3 in vitro. Can also act as a phosphodiesterase by mediating removal of ATP (de-AMPylation) from target proteins. Decreases susceptibility to P.aeruginosa-mediated killing and might therefore play a role in the innate immune response. In Caenorhabditis elegans, this protein is Protein adenylyltransferase fic-1.